We begin with the raw amino-acid sequence, 950 residues long: Protocadherin alpha-13 (950 aa).

An N-terminal signal peptide occupies residues 1–29 (MLSSWQGGPRPRQLLLWLLILAAWETGSG). Topologically, residues 30–697 (QLHYSVPEEA…GPEAALVDVN (668 aa)) are extracellular. Cadherin domains lie at 34 to 133 (SVPE…PPIF), 134 to 242 (PESK…APEF), 243 to 350 (YQSV…APEV), 351 to 455 (TITS…APAF), 456 to 565 (AQPE…APAL), and 581 to 678 (MPRS…APQA). N-linked (GlcNAc...) asparagine glycans are attached at residues asparagine 257 and asparagine 265. N-linked (GlcNAc...) asparagine glycosylation occurs at asparagine 548. The helical transmembrane segment at 698 to 718 (VYLIIAICAVSSLLVLTLLLY) threads the bilayer. Over 719–950 (TALRCSAPPT…GNSTTDNSDQ (232 aa)) the chain is Cytoplasmic. PXXP repeat units follow at residues 734–737 (PGKP), 774–777 (PSLP), 799–802 (PRQP), 832–835 (PGGP), 873–876 (PGNP), and 891–894 (PGSP). Residues 734-894 (PGKPTLVCSS…PDKFIIPGSP (161 aa)) form a 6 X 4 AA repeats of P-X-X-P region. 2 disordered regions span residues 774 to 808 (PSLPPCLGSAEGTGQREEDSEGLKEPRQPNPDWRY) and 827 to 950 (ILRA…NSDQ). A compositionally biased stretch (basic and acidic residues) spans 787–800 (GQREEDSEGLKEPR). Residues 909–923 (DKSDFITFGKKEETK) show a composition bias toward basic and acidic residues.

Its subcellular location is the cell membrane. In terms of biological role, potential calcium-dependent cell-adhesion protein. May be involved in the establishment and maintenance of specific neuronal connections in the brain. This chain is Protocadherin alpha-13 (PCDHA13), found in Pan troglodytes (Chimpanzee).